The following is a 920-amino-acid chain: Puromycin-sensitive aminopeptidase (920 aa).

Residues Glu181 and 317-321 (GAMEN) contribute to the substrate site. His353 is a Zn(2+) binding site. Glu354 acts as the Proton acceptor in catalysis. 2 residues coordinate Zn(2+): His357 and Glu376. 3'-nitrotyrosine is present on Tyr465. A Nuclear localization signal motif is present at residues 727-731 (RRRFK).

This sequence belongs to the peptidase M1 family. Monomer. Zn(2+) serves as cofactor. Widely expressed. Highest expression in brain, particularly the striatum and hippocampus. Expressed in Sertoli cells.

The protein resides in the cytoplasm. It localises to the cytosol. The protein localises to the nucleus. It catalyses the reaction Release of an N-terminal amino acid, preferentially alanine, from a wide range of peptides, amides and arylamides.. Strongly inhibited by bestatin, leuhistin, actinonin, amastatin, 1,10-phenanthroline, DFP, PCMBS, Zn(2+), Cd(2+), Co(2+), Cu(2+), Hg(2+), EDTA and puromycin. Not inhibited by PMSF, and only slightly inhibited by leupeptin and aprotinin. Activity is increased by Mg(2+) and Ca(2+). Functionally, aminopeptidase with broad substrate specificity for several peptides. Involved in proteolytic events essential for cell growth and viability. May act as regulator of neuropeptide activity. Plays a role in the antigen-processing pathway for MHC class I molecules. Involved in the N-terminal trimming of cytotoxic T-cell epitope precursors. Digests the poly-Q peptides found in many cellular proteins. The polypeptide is Puromycin-sensitive aminopeptidase (Npepps) (Mus musculus (Mouse)).